The primary structure comprises 247 residues: Probable transcriptional regulatory protein HRM2_04000 (247 aa).

The protein belongs to the TACO1 family.

The protein resides in the cytoplasm. This chain is Probable transcriptional regulatory protein HRM2_04000, found in Desulforapulum autotrophicum (strain ATCC 43914 / DSM 3382 / VKM B-1955 / HRM2) (Desulfobacterium autotrophicum).